Consider the following 766-residue polypeptide: 5-methyltetrahydropteroyltriglutamate--homocysteine methyltransferase (766 aa).

5-methyltetrahydropteroyltri-L-glutamate-binding positions include 16 to 19 (RELK) and K119. Residues 440–442 (IGS) and E493 each bind L-homocysteine. Residues 440-442 (IGS) and E493 each bind L-methionine. 5-methyltetrahydropteroyltri-L-glutamate-binding positions include 524–525 (RC) and W570. D608 contributes to the L-homocysteine binding site. D608 contributes to the L-methionine binding site. 5-methyltetrahydropteroyltri-L-glutamate is bound at residue E614. Residues H650, C652, and E674 each contribute to the Zn(2+) site. H703 functions as the Proton donor in the catalytic mechanism. C735 provides a ligand contact to Zn(2+).

It belongs to the vitamin-B12 independent methionine synthase family. It depends on Zn(2+) as a cofactor.

The catalysed reaction is 5-methyltetrahydropteroyltri-L-glutamate + L-homocysteine = tetrahydropteroyltri-L-glutamate + L-methionine. Its pathway is amino-acid biosynthesis; L-methionine biosynthesis via de novo pathway; L-methionine from L-homocysteine (MetE route): step 1/1. In terms of biological role, catalyzes the transfer of a methyl group from 5-methyltetrahydrofolate to homocysteine resulting in methionine formation. The sequence is that of 5-methyltetrahydropteroyltriglutamate--homocysteine methyltransferase from Pseudomonas aeruginosa (strain UCBPP-PA14).